The primary structure comprises 482 residues: Docking protein 1 (482 aa).

N-acetylmethionine is present on Met-1. The PH domain occupies 4–119; sequence AVMEGPLFLQ…WVQTLCRTAF (116 aa). At Ser-48 the chain carries Phosphoserine. The IRS-type PTB domain occupies 151–259; the sequence is EGSQFWVTSQ…QQQKAQGKVG (109 aa). Ser-269 and Ser-290 each carry phosphoserine. Residues 269-328 form a disordered region; that stretch reads SHDGETEGKTVPPPVPQDPLGSPPALYAEPLDSLRIPPGPSQDSVYSDPLGSTPAGAGEG. Tyr-295, Tyr-336, Tyr-340, Tyr-361, and Tyr-376 each carry phosphotyrosine. A disordered region spans residues 353–373; sequence TDSKEDPIYDEPEGLAPAPPR. Residue Tyr-397 is modified to Phosphotyrosine; by INSR. The disordered stretch occupies residues 398 to 482; that stretch reads ELPYNPATDD…RAGVKSEGST (85 aa). Position 408 is a phosphotyrosine (Tyr-408). Positions 410–423 are enriched in pro residues; it reads VPPPRSPKPAPAPK. A Phosphoserine modification is found at Ser-415. Over residues 432-459 the composition is skewed to polar residues; the sequence is SGTTRGSGSKGFSSDTALYSQVQKSGTS. Tyr-450 carries the phosphotyrosine modification.

Belongs to the DOK family. Type A subfamily. Interacts with RasGAP, INPP5D/SHIP1 and ABL1. Interacts directly with phosphorylated ITGB3. Interacts with SRMS (via the SH2 and SH3 domains). Post-translationally, constitutively tyrosine-phosphorylated. Phosphorylated by TEC. Phosphorylated on tyrosine residues by the insulin receptor kinase. Results in the negative regulation of the insulin signaling pathway. Phosphorylated by LYN. Phosphorylated on tyrosine residues by SRMS. As to expression, expressed in lung, spleen, skeletal muscle and kidney.

The protein resides in the cytoplasm. The protein localises to the nucleus. Functionally, DOK proteins are enzymatically inert adaptor or scaffolding proteins. They provide a docking platform for the assembly of multimolecular signaling complexes. DOK1 appears to be a negative regulator of the insulin signaling pathway. Modulates integrin activation by competing with talin for the same binding site on ITGB3. In Mus musculus (Mouse), this protein is Docking protein 1 (Dok1).